Consider the following 374-residue polypeptide: tRNA (guanine(26)-N(2))-dimethyltransferase (374 aa).

The Trm1 methyltransferase domain occupies 4–368 (IEATEGTTTF…APLPVLYDAI (365 aa)). S-adenosyl-L-methionine-binding residues include Arg-41, Arg-66, Asp-82, Asp-108, and Ala-109. Residues Cys-237, Cys-240, Cys-256, and Cys-259 each coordinate Zn(2+).

Belongs to the class I-like SAM-binding methyltransferase superfamily. Trm1 family.

The enzyme catalyses guanosine(26) in tRNA + 2 S-adenosyl-L-methionine = N(2)-dimethylguanosine(26) in tRNA + 2 S-adenosyl-L-homocysteine + 2 H(+). Its function is as follows. Dimethylates a single guanine residue at position 26 of a number of tRNAs using S-adenosyl-L-methionine as donor of the methyl groups. The polypeptide is tRNA (guanine(26)-N(2))-dimethyltransferase (Methanoregula boonei (strain DSM 21154 / JCM 14090 / 6A8)).